The primary structure comprises 247 residues: Triosephosphate isomerase (247 aa).

Position 8-10 (8-10 (NWK)) interacts with substrate. His95 serves as the catalytic Electrophile. The Proton acceptor role is filled by Glu162. Residues Gly168 and Ser207 each contribute to the substrate site.

Belongs to the triosephosphate isomerase family. As to quaternary structure, homodimer.

The protein resides in the cytoplasm. It carries out the reaction D-glyceraldehyde 3-phosphate = dihydroxyacetone phosphate. It participates in carbohydrate biosynthesis; gluconeogenesis. It functions in the pathway carbohydrate degradation; glycolysis; D-glyceraldehyde 3-phosphate from glycerone phosphate: step 1/1. In terms of biological role, involved in the gluconeogenesis. Catalyzes stereospecifically the conversion of dihydroxyacetone phosphate (DHAP) to D-glyceraldehyde-3-phosphate (G3P). This Gluconacetobacter diazotrophicus (strain ATCC 49037 / DSM 5601 / CCUG 37298 / CIP 103539 / LMG 7603 / PAl5) protein is Triosephosphate isomerase.